A 409-amino-acid chain; its full sequence is Beta-arrestin-2 (409 aa).

Tyrosine 48 carries the phosphotyrosine modification. 2 positions are modified to hydroxyproline; by PHD2: proline 176 and proline 181. An interaction with TRAF6 region spans residues 240 to 409 (ADICLFSTAQ…KDDDYDDQLC (170 aa)). Serine 360 carries the post-translational modification Phosphoserine. Residues 363 to 409 (PETDVPVDTNLIEFDTNYATDDDIVFEDFARLRLKGMKDDDYDDQLC) form an interaction with AP2B1 region. Threonine 382 carries the phosphothreonine modification. The [DE]-X(1,2)-F-X-X-[FL]-X-X-X-R motif motif lies at 385–395 (DIVFEDFARLR).

It belongs to the arrestin family. As to quaternary structure, homooligomer; the self-association is mediated by InsP6-binding. Heterooligomer with ARRB1; the association is mediated by InsP6-binding. Interacts with ADRB2 and CHRM2. Interacts with PDE4A. Interacts with PDE4D. Interacts with MAPK10, MAPK1 and MAPK3. Interacts with DRD2. Interacts with FSHR. Interacts with CLTC. Interacts with HTR2C. Interacts with CCR5. Interacts with CXCR4. Interacts with SRC. Interacts with DUSP16; the interaction is interrupted by stimulation of AGTR1 and activation of MAPK10. Interacts with CHUK; the interaction is enhanced stimulation of ADRB2. Interacts with RELA. Interacts with MDM2; the interaction is enhanced by activation of GPCRs. Interacts with SLC9A5. Interacts with TRAF6. Interacts with IGF1R. Interacts with ENG. Interacts with KIR2DL1, KIR2DL3 and KIR2DL4. Interacts with LDLR. Interacts with AP2B1. Interacts with C5AR1. Interacts with RAF1. Interacts with MAP2K1. Interacts with MAPK1. Interacts with MAPK10; the interaction enhances MAPK10 activation by MAP3K5. Interacts with MAP2K4; the interaction is enhanced by presence of MAP3K5 and MAPK10. Interacts with MAP3K5. Interacts with AKT1. Interacts with IKBKB and MAP3K14. Interacts with SMO (activated). Interacts with GSK3A and GSK3B. Associates with protein phosphatase 2A (PP2A). Interacts with DHX8; the interaction is detected in the nucleus upon OR1D2 stimulation. Interacts with GAPDHS; the interaction is detected in the nucleus upon OR1D2 stimulation. Interacts with H2AFX; the interaction is detected in the nucleus upon OR1D2 stimulation. Interacts with KIF14; the interaction is detected in the nucleus upon OR1D2 stimulation. Interacts with RCC1; the interaction is detected in the nucleus upon OR1D2 stimulation. Interacts with CXCR4; the interaction is dependent on C-terminal phosphorylation of CXCR4 and allows activation of MAPK1 and MAPK3. Interacts with GPR143. Interacts with HCK and CXCR1 (phosphorylated). Interacts with ACKR3 and ACKR4. Interacts with ARRDC1; the interaction is direct. Interacts with GPR61, GPR62 and GPR135. Interacts (via NACHT and LRR domains) with NLRP3; this interaction is direct and inducible by omega-3 polyunsaturated fatty acids (PUFAs). Interacts with FFAR4 (via C-terminus); this interaction is stimulated by long-chain fatty acids (LCFAs). Interacts with GPR35. Interacts with GPR84. Interacts with TIGIT; this interaction inhibits the NF-kappa-B pathway. Interacts with TGFBR3. In terms of processing, phosphorylated at Thr-382 in the cytoplasm; probably dephosphorylated at the plasma membrane. The phosphorylation does not regulate internalization and recycling of ADRB2, interaction with clathrin or AP2B1. Post-translationally, the ubiquitination status appears to regulate the formation and trafficking of beta-arrestin-GPCR complexes and signaling. Ubiquitination appears to occur GPCR-specific. Ubiquitinated by MDM2; the ubiquitination is required for rapid internalization of ADRB2. Deubiquitinated by USP33; the deubiquitination leads to a dissociation of the beta-arrestin-GPCR complex. Stimulation of a class A GPCR, such as ADRB2, induces transient ubiquitination and subsequently promotes association with USP33. Stimulation of a class B GPCR promotes a sustained ubiquitination. Deubiquitinated by USP20; allowing USP20 to deubiquitinate TRAF6 leading to inhibition of NF-kappa-B signaling. Hydroxylation by PHD2 modulates the rate of internalization by slowing down recruitment to the plasma membrane and inhibiting subsequent co-internalization with class A receptors.

Its subcellular location is the cytoplasm. It is found in the nucleus. The protein resides in the cell membrane. It localises to the membrane. The protein localises to the clathrin-coated pit. Its subcellular location is the cytoplasmic vesicle. Functionally, functions in regulating agonist-mediated G-protein coupled receptor (GPCR) signaling by mediating both receptor desensitization and resensitization processes. During homologous desensitization, beta-arrestins bind to the GPRK-phosphorylated receptor and sterically preclude its coupling to the cognate G-protein; the binding appears to require additional receptor determinants exposed only in the active receptor conformation. The beta-arrestins target many receptors for internalization by acting as endocytic adapters (CLASPs, clathrin-associated sorting proteins) and recruiting the GPRCs to the adapter protein 2 complex 2 (AP-2) in clathrin-coated pits (CCPs). However, the extent of beta-arrestin involvement appears to vary significantly depending on the receptor, agonist and cell type. Internalized arrestin-receptor complexes traffic to intracellular endosomes, where they remain uncoupled from G-proteins. Two different modes of arrestin-mediated internalization occur. Class A receptors, like ADRB2, OPRM1, ENDRA, D1AR and ADRA1B dissociate from beta-arrestin at or near the plasma membrane and undergo rapid recycling. Class B receptors, like AVPR2, AGTR1, NTSR1, TRHR and TACR1 internalize as a complex with arrestin and traffic with it to endosomal vesicles, presumably as desensitized receptors, for extended periods of time. Receptor resensitization then requires that receptor-bound arrestin is removed so that the receptor can be dephosphorylated and returned to the plasma membrane. Mediates endocytosis of CCR7 following ligation of CCL19 but not CCL21. Involved in internalization of P2RY1, P2RY4, P2RY6 and P2RY11 and ATP-stimulated internalization of P2RY2. Involved in phosphorylation-dependent internalization of OPRD1 and subsequent recycling or degradation. Involved in ubiquitination of IGF1R. Beta-arrestins function as multivalent adapter proteins that can switch the GPCR from a G-protein signaling mode that transmits short-lived signals from the plasma membrane via small molecule second messengers and ion channels to a beta-arrestin signaling mode that transmits a distinct set of signals that are initiated as the receptor internalizes and transits the intracellular compartment. Acts as a signaling scaffold for MAPK pathways such as MAPK1/3 (ERK1/2) and MAPK10 (JNK3). ERK1/2 and JNK3 activated by the beta-arrestin scaffold are largely excluded from the nucleus and confined to cytoplasmic locations such as endocytic vesicles, also called beta-arrestin signalosomes. Acts as a signaling scaffold for the AKT1 pathway. GPCRs for which the beta-arrestin-mediated signaling relies on both ARRB1 and ARRB2 (codependent regulation) include ADRB2, F2RL1 and PTH1R. For some GPCRs the beta-arrestin-mediated signaling relies on either ARRB1 or ARRB2 and is inhibited by the other respective beta-arrestin form (reciprocal regulation). Increases ERK1/2 signaling in AGTR1- and AVPR2-mediated activation (reciprocal regulation). Involved in CCR7-mediated ERK1/2 signaling involving ligand CCL19. Is involved in type-1A angiotensin II receptor/AGTR1-mediated ERK activity. Is involved in type-1A angiotensin II receptor/AGTR1-mediated MAPK10 activity. Is involved in dopamine-stimulated AKT1 activity in the striatum by disrupting the association of AKT1 with its negative regulator PP2A. Involved in AGTR1-mediated chemotaxis. Appears to function as signaling scaffold involved in regulation of MIP-1-beta-stimulated CCR5-dependent chemotaxis. Involved in attenuation of NF-kappa-B-dependent transcription in response to GPCR or cytokine stimulation by interacting with and stabilizing CHUK. Suppresses UV-induced NF-kappa-B-dependent activation by interacting with CHUK. The function is promoted by stimulation of ADRB2 and dephosphorylation of ARRB2. Involved in p53/TP53-mediated apoptosis by regulating MDM2 and reducing the MDM2-mediated degradation of p53/TP53. May serve as nuclear messenger for GPCRs. Upon stimulation of OR1D2, may be involved in regulation of gene expression during the early processes of fertilization. Also involved in regulation of receptors other than GPCRs. Involved in endocytosis of TGFBR2 and TGFBR3 and down-regulates TGF-beta signaling such as NF-kappa-B activation. Involved in endocytosis of low-density lipoprotein receptor/LDLR. Involved in endocytosis of smoothened homolog/Smo, which also requires GRK2. Involved in endocytosis of SLC9A5. Involved in endocytosis of ENG and subsequent TGF-beta-mediated ERK activation and migration of epithelial cells. Involved in Toll-like receptor and IL-1 receptor signaling through the interaction with TRAF6 which prevents TRAF6 autoubiquitination and oligomerization required for activation of NF-kappa-B and JUN. Involved in insulin resistance by acting as insulin-induced signaling scaffold for SRC, AKT1 and INSR. Involved in regulation of inhibitory signaling of natural killer cells by recruiting PTPN6 and PTPN11 to KIR2DL1. Involved in IL8-mediated granule release in neutrophils. Involved in the internalization of the atypical chemokine receptor ACKR3. Acts as an adapter protein coupling FFAR4 receptor to specific downstream signaling pathways, as well as mediating receptor endocytosis. During the activation step of NLRP3 inflammasome, directly associates with NLRP3 leading to inhibition of pro-inflammatory cytokine release and inhibition of inflammation. This Homo sapiens (Human) protein is Beta-arrestin-2 (ARRB2).